Here is a 127-residue protein sequence, read N- to C-terminus: UPF0251 protein Ccel_0627 (127 aa).

Belongs to the UPF0251 family.

This chain is UPF0251 protein Ccel_0627, found in Ruminiclostridium cellulolyticum (strain ATCC 35319 / DSM 5812 / JCM 6584 / H10) (Clostridium cellulolyticum).